Reading from the N-terminus, the 2599-residue chain is Non-reducing polyketide synthase azaA (2599 aa).

Residues 95-231 form an N-terminal acylcarrier protein transacylase domain (SAT) region; it reads PNILLSPMVV…AARSISSLQQ (137 aa). The Nucleophile; for transacylase activity role is filled by Cys-132. Catalysis depends on His-250, which acts as the Proton donor/acceptor; for transacylase activity. Positions 372–790 constitute a Ketosynthase family 3 (KS3) domain; sequence PNEIAVIGMS…GSNASMVVAQ (419 aa). Active-site for beta-ketoacyl synthase activity residues include Cys-539, His-674, and His-713. Residues 902 to 1193 are malonyl-CoA:ACP transacylase (MAT) domain; the sequence is FGGQISNYVG…ITSMASRALG (292 aa). The interval 1282 to 1413 is N-terminal hotdog fold; that stretch reads PKTLWSLIEA…GKLAFLSGQD (132 aa). The 310-residue stretch at 1282–1591 folds into the PKS/mFAS DH domain; the sequence is PKTLWSLIEA…YHKVAKASMS (310 aa). A product template (PT) domain region spans residues 1310-1589; that stretch reads LVSGHVIANT…INYHKVAKAS (280 aa). His-1314 acts as the Proton acceptor; for dehydratase activity in catalysis. A C-terminal hotdog fold region spans residues 1443-1591; the sequence is ADDIIQGRNI…YHKVAKASMS (149 aa). Residue Asp-1499 is the Proton donor; for dehydratase activity of the active site. Residues 1601–1652 are disordered; the sequence is EAAPSSSTRAHPTSSSSPRLPGPFVPEDKSQNETQTAGTNAVAKKKSEKSAQ. Over residues 1602–1619 the composition is skewed to low complexity; the sequence is AAPSSSTRAHPTSSSSPR. A Carrier domain is found at 1653 to 1727; it reads QNVLDKTRAL…GLVEYVQSAV (75 aa). Ser-1687 carries the post-translational modification O-(pantetheine 4'-phosphoryl)serine. A disordered region spans residues 1749 to 1779; it reads NLAASPSSSSSSTNLTEDSSLDPTETTTNIS. The segment covering 1750–1766 has biased composition (low complexity); it reads LAASPSSSSSSTNLTED. Polar residues predominate over residues 1769-1779; sequence LDPTETTTNIS. Residues 1952 to 2140 form a methyltransferase domain region; it reads DSLLNKLSYR…VGYGQVDWTD (189 aa). The interval 2222-2467 is NADPH-binding (R) domain; it reads ITGATGSLGV…LCWTPVNDVA (246 aa).

The cofactor is pantetheine 4'-phosphate.

The protein operates within secondary metabolite biosynthesis. Its function is as follows. Non-reducing polyketide synthase; part of the gene cluster that mediates the biosynthesis of azaphilones, a class of fungal metabolites characterized by a highly oxygenated pyrano-quinone bicyclic core and exhibiting a broad range of bioactivities. In the first step, the non-reducing polyketide synthase azaA forms the hexaketide precursor from successive condensations of five malonyl-CoA units, presumably with a simple acetyl-CoA starter unit. The reactive polyketide chain then undergoes a PT-mediated C2-C7 cyclization to afford the aromatic ring and is eventually released as an aldehyde through the R-domain. The putative ketoreductase azaE is proposed to catalyze the reduction of the terminal ketone resulting in the early culture product FK17-P2a. The monooxygenase azaH was demonstrated to be the only enzyme required to convert FK17-P2a to azanigerone E. AzaH first hydroxylates the benzaldehyde intermediate FK17-P2a at C4, which triggers the formation of the pyran-ring to afford azanigerone E. In parallel, the 2,4-dimethylhexanoyl chain is synthesized by the HR-PKS azaB and is proposed to be transferred to the C4-hydroxyl of azanigerone E by the acyltransferase azaD directly from the ACP domain of azaB. Alternatively, the 2,4-dimethyl-hexanoyl chain may be offloaded from the HR-PKS as a carboxylic acid and converted to an acyl-CoA by azaF. The resulting acyl-CoA molecule could then be taken up as a substrate by AzaD to form azanigerone B. To yield the carboxylic acid substituent in azanigerone A, the hydroxypropyl side chain of azanigerone B would need to undergo a C-C oxidative cleavage catalyzed by cytochrome P450 AzaI. AzaI is proposed to act on a vicinal diol that leads to a C-C bond scission either through an alkoxyradical intermediate or a peroxy complex. In the biosynthesis of azanigerone A, azanigerone B first undergoes hydroxylation at C10, possibly catalyzed by one of the two FAD-dependent monooxygenases encoded in the cluster, azaG or azaL, resulting in the vicinal diol azanigerone C. Oxidative cleavage of azanigerone C by azaI would yield the corresponding aldehyde derivative of azanigerone A. Finally, the dehydrogenase azaJ is proposed to convert the aldehyde functional group into the carboxylic acid, completing the conversion from azanigerone B to azanigerone A. Alternatively, the oxidation of aldehyde to carboxylic acid may be catalyzed by the same P450 enzyme azaI via consecutive oxidation or by endogenous alcohol dehydrogenase. This Aspergillus niger (strain ATCC 1015 / CBS 113.46 / FGSC A1144 / LSHB Ac4 / NCTC 3858a / NRRL 328 / USDA 3528.7) protein is Non-reducing polyketide synthase azaA.